The sequence spans 362 residues: Alcohol dehydrogenase 13 (362 aa).

Cysteine 51, histidine 73, cysteine 104, cysteine 107, cysteine 110, cysteine 118, and cysteine 168 together coordinate Zn(2+). Histidine 73 is a substrate binding site. NAD(+) is bound by residues 193–198 and 280–282; these read GLGGLG and VGA.

Belongs to the zinc-containing alcohol dehydrogenase family. Class-III subfamily. Homodimer. Zn(2+) is required as a cofactor.

This Catharanthus roseus (Madagascar periwinkle) protein is Alcohol dehydrogenase 13.